Here is an 83-residue protein sequence, read N- to C-terminus: Cytochrome b559 subunit alpha (83 aa).

The helical transmembrane segment at 21–35 (IIHSITIPSLFIAGW) threads the bilayer. Residue histidine 23 participates in heme binding.

It belongs to the PsbE/PsbF family. In terms of assembly, heterodimer of an alpha subunit and a beta subunit. PSII is composed of 1 copy each of membrane proteins PsbA, PsbB, PsbC, PsbD, PsbE, PsbF, PsbH, PsbI, PsbJ, PsbK, PsbL, PsbM, PsbT, PsbX, PsbY, PsbZ, Psb30/Ycf12, at least 3 peripheral proteins of the oxygen-evolving complex and a large number of cofactors. It forms dimeric complexes. The cofactor is heme b.

Its subcellular location is the plastid. The protein localises to the chloroplast thylakoid membrane. This b-type cytochrome is tightly associated with the reaction center of photosystem II (PSII). PSII is a light-driven water:plastoquinone oxidoreductase that uses light energy to abstract electrons from H(2)O, generating O(2) and a proton gradient subsequently used for ATP formation. It consists of a core antenna complex that captures photons, and an electron transfer chain that converts photonic excitation into a charge separation. The polypeptide is Cytochrome b559 subunit alpha (Lotus japonicus (Lotus corniculatus var. japonicus)).